A 203-amino-acid polypeptide reads, in one-letter code: Urease accessory protein UreG (203 aa).

Gly-14–Thr-21 is a binding site for GTP.

This sequence belongs to the SIMIBI class G3E GTPase family. UreG subfamily. As to quaternary structure, homodimer. UreD, UreF and UreG form a complex that acts as a GTP-hydrolysis-dependent molecular chaperone, activating the urease apoprotein by helping to assemble the nickel containing metallocenter of UreC. The UreE protein probably delivers the nickel.

It is found in the cytoplasm. Its function is as follows. Facilitates the functional incorporation of the urease nickel metallocenter. This process requires GTP hydrolysis, probably effectuated by UreG. This is Urease accessory protein UreG from Rhizobium johnstonii (strain DSM 114642 / LMG 32736 / 3841) (Rhizobium leguminosarum bv. viciae).